The chain runs to 149 residues: Transcription antitermination protein NusB (149 aa).

The protein belongs to the NusB family.

Functionally, involved in transcription antitermination. Required for transcription of ribosomal RNA (rRNA) genes. Binds specifically to the boxA antiterminator sequence of the ribosomal RNA (rrn) operons. This Acinetobacter baumannii (strain SDF) protein is Transcription antitermination protein NusB.